The sequence spans 493 residues: Lysine--tRNA ligase (493 aa).

Mg(2+) contacts are provided by Glu402 and Glu409.

The protein belongs to the class-II aminoacyl-tRNA synthetase family. Homodimer. The cofactor is Mg(2+).

The protein resides in the cytoplasm. The catalysed reaction is tRNA(Lys) + L-lysine + ATP = L-lysyl-tRNA(Lys) + AMP + diphosphate. The chain is Lysine--tRNA ligase from Ureaplasma parvum serovar 3 (strain ATCC 27815 / 27 / NCTC 11736).